A 182-amino-acid polypeptide reads, in one-letter code: Ferredoxin-thioredoxin reductase subunit A1, chloroplastic (182 aa).

The transit peptide at 1–81 (MSSQIALSPA…VAIKSADSIN (81 aa)) directs the protein to the chloroplast.

Belongs to the ferredoxin thioredoxin reductase alpha subunit family. Heterodimer of subunit A (variable subunit) and subunit B (catalytic subunit). Heterodimeric FTR forms a complex with ferredoxin and thioredoxin.

Its subcellular location is the plastid. The protein localises to the chloroplast. In terms of biological role, variable subunit of the ferredoxin-thioredoxin reductase (FTR), which catalyzes the two-electron reduction of thioredoxins by the electrons provided by reduced ferredoxin. In Arabidopsis thaliana (Mouse-ear cress), this protein is Ferredoxin-thioredoxin reductase subunit A1, chloroplastic.